The sequence spans 910 residues: Protein translocase subunit SecA (910 aa).

ATP-binding positions include Gln87, 105-109, and Asp501; that span reads GEGKT. 4 residues coordinate Zn(2+): Cys894, Cys896, Cys905, and His906.

This sequence belongs to the SecA family. As to quaternary structure, monomer and homodimer. Part of the essential Sec protein translocation apparatus which comprises SecA, SecYEG and auxiliary proteins SecDF-YajC and YidC. It depends on Zn(2+) as a cofactor.

It is found in the cell inner membrane. It localises to the cytoplasm. It carries out the reaction ATP + H2O + cellular proteinSide 1 = ADP + phosphate + cellular proteinSide 2.. Part of the Sec protein translocase complex. Interacts with the SecYEG preprotein conducting channel. Has a central role in coupling the hydrolysis of ATP to the transfer of proteins into and across the cell membrane, serving both as a receptor for the preprotein-SecB complex and as an ATP-driven molecular motor driving the stepwise translocation of polypeptide chains across the membrane. The polypeptide is Protein translocase subunit SecA (Acidiphilium cryptum (strain JF-5)).